Reading from the N-terminus, the 196-residue chain is Segregation and condensation protein B (196 aa).

The protein belongs to the ScpB family. As to quaternary structure, homodimer. Homodimerization may be required to stabilize the binding of ScpA to the Smc head domains. Component of a cohesin-like complex composed of ScpA, ScpB and the Smc homodimer, in which ScpA and ScpB bind to the head domain of Smc. The presence of the three proteins is required for the association of the complex with DNA.

Its subcellular location is the cytoplasm. Functionally, participates in chromosomal partition during cell division. May act via the formation of a condensin-like complex containing Smc and ScpA that pull DNA away from mid-cell into both cell halves. The chain is Segregation and condensation protein B from Lactobacillus johnsonii (strain CNCM I-12250 / La1 / NCC 533).